Consider the following 335-residue polypeptide: Probable BOI-related E3 ubiquitin-protein ligase 3 (335 aa).

The interval 196-232 (LEEKVKSLCVENQIWRDVAQSNEATVNALRSNLQQVL) is WRD domain. The RING-type zinc-finger motif lies at 287–322 (CRSCGKGEASVLLLPCRHMCLCSVCGSSLNTCPICK).

In terms of assembly, interacts with the DELLA proteins GAI, RGA, RGL1, RGL2 and RGL3.

The catalysed reaction is S-ubiquitinyl-[E2 ubiquitin-conjugating enzyme]-L-cysteine + [acceptor protein]-L-lysine = [E2 ubiquitin-conjugating enzyme]-L-cysteine + N(6)-ubiquitinyl-[acceptor protein]-L-lysine.. Its pathway is protein degradation; proteasomal ubiquitin-dependent pathway. Functionally, probable E3 ubiquitin-protein ligase. Has no effect on the stability of the DELLA proteins. This chain is Probable BOI-related E3 ubiquitin-protein ligase 3 (BRG3), found in Arabidopsis thaliana (Mouse-ear cress).